The primary structure comprises 363 residues: DNA replication and repair protein RecF (363 aa).

30–37 (GPNGSGKT) serves as a coordination point for ATP.

This sequence belongs to the RecF family.

It localises to the cytoplasm. Its function is as follows. The RecF protein is involved in DNA metabolism; it is required for DNA replication and normal SOS inducibility. RecF binds preferentially to single-stranded, linear DNA. It also seems to bind ATP. This chain is DNA replication and repair protein RecF, found in Chlorobium limicola (strain DSM 245 / NBRC 103803 / 6330).